Consider the following 187-residue polypeptide: MMKIIAFVGMPASGKSEASRIAAEMDIPVIIMGDVIRKEVLKRGLEPNDSNTGMVATDLRKCEGMDAVARRCVSQIRETGSELVVVDGVRGIAEVECFRQEFGKGFILISIYAPLEVRFSRVQKRGRSDDMNSIDGLRQRDERELSWGMGEAIEASNVEIENSFTLETFRKDVNDVLNNYLKSNSEK.

ATP is bound at residue 9–16; it reads GMPASGKS.

It belongs to the UPF0200 family.

The polypeptide is UPF0200 protein MA_4660 (Methanosarcina acetivorans (strain ATCC 35395 / DSM 2834 / JCM 12185 / C2A)).